The primary structure comprises 252 residues: Imidazole glycerol phosphate synthase subunit HisF (252 aa).

Catalysis depends on residues Asp11 and Asp130.

Belongs to the HisA/HisF family. In terms of assembly, heterodimer of HisH and HisF.

The protein localises to the cytoplasm. The enzyme catalyses 5-[(5-phospho-1-deoxy-D-ribulos-1-ylimino)methylamino]-1-(5-phospho-beta-D-ribosyl)imidazole-4-carboxamide + L-glutamine = D-erythro-1-(imidazol-4-yl)glycerol 3-phosphate + 5-amino-1-(5-phospho-beta-D-ribosyl)imidazole-4-carboxamide + L-glutamate + H(+). Its pathway is amino-acid biosynthesis; L-histidine biosynthesis; L-histidine from 5-phospho-alpha-D-ribose 1-diphosphate: step 5/9. Functionally, IGPS catalyzes the conversion of PRFAR and glutamine to IGP, AICAR and glutamate. The HisF subunit catalyzes the cyclization activity that produces IGP and AICAR from PRFAR using the ammonia provided by the HisH subunit. This chain is Imidazole glycerol phosphate synthase subunit HisF, found in Bacillus cereus (strain G9842).